Consider the following 357-residue polypeptide: Peptide chain release factor 1 (357 aa).

N5-methylglutamine is present on Gln236.

This sequence belongs to the prokaryotic/mitochondrial release factor family. Methylated by PrmC. Methylation increases the termination efficiency of RF1.

The protein localises to the cytoplasm. Peptide chain release factor 1 directs the termination of translation in response to the peptide chain termination codons UAG and UAA. This is Peptide chain release factor 1 from Mycobacterium ulcerans (strain Agy99).